Consider the following 496-residue polypeptide: Cyclin-dependent kinase 16 (496 aa).

Positions 1-97 are disordered; it reads MDRMKKIKRQ…TSSDEVQSPV (97 aa). S12 is subject to Phosphoserine; by BRSK2. 7 positions are modified to phosphoserine: S36, S42, S64, S65, S78, S82, and S89. Basic and acidic residues predominate over residues 69 to 78; it reads IVHEDLKMGS. Residues 83-93 are compositionally biased toward polar residues; the sequence is DQASATSSDEV. S95 carries the phosphoserine; by CDK5 modification. Phosphoserine occurs at positions 110, 119, 138, 146, 153, and 155. The region spanning 165–446 is the Protein kinase domain; sequence YIKLDKLGEG…AEDAMKHPFF (282 aa). Residues 171-179 and K194 contribute to the ATP site; that span reads LGEGTYATV. The residue at position 175 (T175) is a Phosphothreonine. The Proton acceptor role is filled by D286. Residue T380 is modified to Phosphothreonine. 3 positions are modified to phosphoserine: S391, S478, and S480.

This sequence belongs to the protein kinase superfamily. CMGC Ser/Thr protein kinase family. CDC2/CDKX subfamily. In terms of assembly, found in a complex containing CABLES1, CDK17 and TDRD7. Interacts with BRSK2. Identified in a complex with NSF, syntaxin-1, synaptotagmin, SYN1, SYP and CDK5R1. Interacts with YWHAH, YWHAQ and YWHAZ. Interacts with CCNY; this interaction increases the CDK16 kinase activity. Interacts with CCNYL1; this interaction mutually increases the stability of CDK16 and CCNYL1 and increases the kinase activity of CDK16. Interacts with NSF. Post-translationally, phosphorylation of CDK16 is essential for the binding of CCNY, but also essential for the regulation of CDK16 kinase activity. Phosphorylation of CDK16 is essential for the binding of CCNYl1, but also essential for the regulation of CDK16 kinase activity. Ser-146 and Ser-153 are the most critical sites for the binding of CCNYL1 and for modulating CDK16 kinase activity. Phosphorylation at Ser-153 inhibits kinase activity. Detected in pancreas islets (at protein level). Detected in brain and pancreas.

Its subcellular location is the cytoplasm. The protein resides in the cytoplasmic vesicle. It localises to the secretory vesicle. The protein localises to the cell membrane. It is found in the synapse. Its subcellular location is the synaptosome. It catalyses the reaction L-seryl-[protein] + ATP = O-phospho-L-seryl-[protein] + ADP + H(+). The enzyme catalyses L-threonyl-[protein] + ATP = O-phospho-L-threonyl-[protein] + ADP + H(+). In terms of biological role, protein kinase that plays a role in vesicle-mediated transport processes and exocytosis. Regulates GH1 release by brain neurons. Phosphorylates NSF, and thereby regulates NSF oligomerization. Required for normal spermatogenesis. Regulates neuron differentiation and dendrite development. Plays a role in the regulation of insulin secretion in response to changes in blood glucose levels. Can phosphorylate CCNY at 'Ser-336' (in vitro). This Homo sapiens (Human) protein is Cyclin-dependent kinase 16 (CDK16).